Here is a 231-residue protein sequence, read N- to C-terminus: Octanoyltransferase (231 aa).

Residues proline 29–proline 231 form the BPL/LPL catalytic domain. Residues arginine 68–histidine 75, alanine 164–glycine 166, and glycine 177–alanine 179 each bind substrate. Residue cysteine 195 is the Acyl-thioester intermediate of the active site.

It belongs to the LipB family.

Its subcellular location is the cytoplasm. The catalysed reaction is octanoyl-[ACP] + L-lysyl-[protein] = N(6)-octanoyl-L-lysyl-[protein] + holo-[ACP] + H(+). It participates in protein modification; protein lipoylation via endogenous pathway; protein N(6)-(lipoyl)lysine from octanoyl-[acyl-carrier-protein]: step 1/2. Its function is as follows. Catalyzes the transfer of endogenously produced octanoic acid from octanoyl-acyl-carrier-protein onto the lipoyl domains of lipoate-dependent enzymes. Lipoyl-ACP can also act as a substrate although octanoyl-ACP is likely to be the physiological substrate. This Verminephrobacter eiseniae (strain EF01-2) protein is Octanoyltransferase.